The primary structure comprises 201 residues: Adenylyl-sulfate kinase (201 aa).

Residues 1-23 (MALHDENVVWHSHPVTPQQREQH) form a disordered region. 35-42 (GLSGSGKS) contributes to the ATP binding site. The active-site Phosphoserine intermediate is Ser-109.

The protein belongs to the APS kinase family.

The enzyme catalyses adenosine 5'-phosphosulfate + ATP = 3'-phosphoadenylyl sulfate + ADP + H(+). Its pathway is sulfur metabolism; hydrogen sulfide biosynthesis; sulfite from sulfate: step 2/3. Functionally, catalyzes the synthesis of activated sulfate. The sequence is that of Adenylyl-sulfate kinase from Escherichia coli O6:K15:H31 (strain 536 / UPEC).